The chain runs to 114 residues: Helper of Tim protein 13 (114 aa).

The segment at 10-90 (LVDKESRCEH…DSLQCPNCRS (81 aa)) adopts a CHY-type; degenerate zinc-finger fold. Positions 17, 19, 40, 43, 67, 70, 85, and 88 each coordinate Zn(2+).

In terms of assembly, interacts with the small Tim proteins.

Its subcellular location is the mitochondrion intermembrane space. It is found in the mitochondrion membrane. Functionally, required for the assembly or recycling of the small Tim proteins in the mitochondrial intermembrane, thereby participating in the import and insertion of multi-pass transmembrane proteins into the mitochondrial inner membrane. In Kluyveromyces lactis (strain ATCC 8585 / CBS 2359 / DSM 70799 / NBRC 1267 / NRRL Y-1140 / WM37) (Yeast), this protein is Helper of Tim protein 13 (HOT13).